We begin with the raw amino-acid sequence, 268 residues long: Undecaprenyl-diphosphatase (268 aa).

The next 7 membrane-spanning stretches (helical) occupy residues 42–62 (VPGK…ICVL), 86–106 (AIFV…DFIL), 108–128 (VLFT…AIVV), 158–178 (IALV…LLVG), 184–204 (AAEF…VVSL), 218–238 (LIAA…KWLV), and 246–266 (FTVF…YFSL).

It belongs to the UppP family.

It is found in the cell inner membrane. The catalysed reaction is di-trans,octa-cis-undecaprenyl diphosphate + H2O = di-trans,octa-cis-undecaprenyl phosphate + phosphate + H(+). In terms of biological role, catalyzes the dephosphorylation of undecaprenyl diphosphate (UPP). Confers resistance to bacitracin. In Parvibaculum lavamentivorans (strain DS-1 / DSM 13023 / NCIMB 13966), this protein is Undecaprenyl-diphosphatase.